The primary structure comprises 150 residues: uncharacterized protein (150 aa).

The Rhodanese domain occupies 19-93 (GAQDYVLVDV…SSKRLALRES (75 aa)).

This is an uncharacterized protein from Synechococcus elongatus.